Reading from the N-terminus, the 511-residue chain is Ribose import ATP-binding protein RbsA 3 (511 aa).

ABC transporter domains are found at residues Leu-21 to Asp-257 and Arg-256 to Ala-511. Gly-53 to Ser-60 provides a ligand contact to ATP.

This sequence belongs to the ABC transporter superfamily. Ribose importer (TC 3.A.1.2.1) family. The complex is composed of an ATP-binding protein (RbsA), two transmembrane proteins (RbsC) and a solute-binding protein (RbsB).

It is found in the cell inner membrane. It catalyses the reaction D-ribose(out) + ATP + H2O = D-ribose(in) + ADP + phosphate + H(+). Functionally, part of the ABC transporter complex RbsABC involved in ribose import. Responsible for energy coupling to the transport system. This Rhizobium etli (strain ATCC 51251 / DSM 11541 / JCM 21823 / NBRC 15573 / CFN 42) protein is Ribose import ATP-binding protein RbsA 3.